Reading from the N-terminus, the 138-residue chain is Basic phospholipase A2 Drk-b1 (138 aa).

Residues Met-1–Gly-16 form the signal peptide. 7 cysteine pairs are disulfide-bonded: Cys-42–Cys-131, Cys-44–Cys-60, Cys-59–Cys-111, Cys-65–Cys-138, Cys-66–Cys-104, Cys-73–Cys-97, and Cys-91–Cys-102. Residues Tyr-43, Gly-45, and Gly-47 each contribute to the Ca(2+) site. Residue His-63 is part of the active site. Asp-64 is a Ca(2+) binding site. Residue Asp-105 is part of the active site.

It depends on Ca(2+) as a cofactor. Expressed by the venom gland.

Its subcellular location is the secreted. It carries out the reaction a 1,2-diacyl-sn-glycero-3-phosphocholine + H2O = a 1-acyl-sn-glycero-3-phosphocholine + a fatty acid + H(+). Exhibits high hydrolytic activities and shows strong preference for the anionic micelles (dPPC with deoxycholate) to the zwitterionic micelles (dPPC with Triton X-100). PLA2 catalyzes the calcium-dependent hydrolysis of the 2-acyl groups in 3-sn-phosphoglycerides. The protein is Basic phospholipase A2 Drk-b1 of Daboia russelii (Russel's viper).